A 368-amino-acid polypeptide reads, in one-letter code: Quinolinate synthase (368 aa).

Positions 46 and 63 each coordinate iminosuccinate. Cys110 is a binding site for [4Fe-4S] cluster. Residues 141-143 (YVN) and Ser162 contribute to the iminosuccinate site. Cys230 lines the [4Fe-4S] cluster pocket. Residues 256 to 258 (HPE) and Thr273 contribute to the iminosuccinate site. Position 320 (Cys320) interacts with [4Fe-4S] cluster.

This sequence belongs to the quinolinate synthase family. Type 3 subfamily. As to quaternary structure, homotrimer. [4Fe-4S] cluster is required as a cofactor.

Its subcellular location is the cytoplasm. It carries out the reaction iminosuccinate + dihydroxyacetone phosphate = quinolinate + phosphate + 2 H2O + H(+). The protein operates within cofactor biosynthesis; NAD(+) biosynthesis; quinolinate from iminoaspartate: step 1/1. Catalyzes the condensation of iminoaspartate with dihydroxyacetone phosphate to form quinolinate. The sequence is that of Quinolinate synthase from Bacillus subtilis (strain 168).